The primary structure comprises 156 residues: Small ribosomal subunit protein uS7 (156 aa).

This sequence belongs to the universal ribosomal protein uS7 family. Part of the 30S ribosomal subunit. Contacts proteins S9 and S11.

Its function is as follows. One of the primary rRNA binding proteins, it binds directly to 16S rRNA where it nucleates assembly of the head domain of the 30S subunit. Is located at the subunit interface close to the decoding center, probably blocks exit of the E-site tRNA. The sequence is that of Small ribosomal subunit protein uS7 from Rhodobacter capsulatus (Rhodopseudomonas capsulata).